Here is a 108-residue protein sequence, read N- to C-terminus: Tubulin-specific chaperone A (108 aa).

Position 2 is an N-acetylalanine (A2).

It belongs to the TBCA family. Supercomplex made of cofactors A to E. Cofactors A and D function by capturing and stabilizing tubulin in a quasi-native conformation. Cofactor E binds to the cofactor D-tubulin complex; interaction with cofactor C then causes the release of tubulin polypeptides that are committed to the native state. As to expression, widely expressed, but is most abundant in the testis.

The protein resides in the cytoplasm. It is found in the cytoskeleton. In terms of biological role, tubulin-folding protein; involved in the early step of the tubulin folding pathway. The sequence is that of Tubulin-specific chaperone A (Tbca) from Mus musculus (Mouse).